Reading from the N-terminus, the 457-residue chain is Tubulin beta chain (457 aa).

The GTP site is built by Gln-11, Glu-69, Ser-138, Gly-142, Thr-143, Gly-144, Asn-204, and Asn-226. Glu-69 is a binding site for Mg(2+). Phosphoserine is present on residues Ser-278 and Ser-280. The segment at Gln-423–Glu-457 is disordered. Over residues Thr-429–Gly-440 the composition is skewed to acidic residues.

It belongs to the tubulin family. As to quaternary structure, dimer of alpha and beta chains. A typical microtubule is a hollow water-filled tube with an outer diameter of 25 nm and an inner diameter of 15 nM. Alpha-beta heterodimers associate head-to-tail to form protofilaments running lengthwise along the microtubule wall with the beta-tubulin subunit facing the microtubule plus end conferring a structural polarity. Microtubules usually have 13 protofilaments but different protofilament numbers can be found in some organisms and specialized cells. Requires Mg(2+) as cofactor.

The protein resides in the cytoplasm. It localises to the cytoskeleton. Its function is as follows. Tubulin is the major constituent of microtubules, a cylinder consisting of laterally associated linear protofilaments composed of alpha- and beta-tubulin heterodimers. Microtubules grow by the addition of GTP-tubulin dimers to the microtubule end, where a stabilizing cap forms. Below the cap, tubulin dimers are in GDP-bound state, owing to GTPase activity of alpha-tubulin. The sequence is that of Tubulin beta chain (TUB2) from Saccharomyces cerevisiae (strain ATCC 204508 / S288c) (Baker's yeast).